A 90-amino-acid chain; its full sequence is Iron oxidase (90 aa).

Residues 1–37 (MSEKDKMITRRDALRNIAVVVGSVATTTMMGVGVADA) constitute a signal peptide (tat-type signal). 4 residues coordinate [4Fe-4S] cluster: cysteine 57, cysteine 60, cysteine 69, and cysteine 82.

The protein belongs to the high-potential iron-sulfur protein (HiPIP) family. As to quaternary structure, homomultimer. Post-translationally, predicted to be exported by the Tat system. The position of the signal peptide cleavage has been experimentally proven.

It is found in the periplasm. In terms of biological role, catalyzes the oxidation of Fe(2+) to Fe(3+) coupled to cytochrome c552 reduction. The chain is Iron oxidase (iro) from Acidithiobacillus ferrooxidans (Thiobacillus ferrooxidans).